A 1193-amino-acid chain; its full sequence is Laminin subunit gamma-2 (1193 aa).

The N-terminal stretch at 1-21 (MPALWLGCCLCFSLLLPAARA) is a signal peptide. 12 disulfide bridges follow: cysteine 28-cysteine 37, cysteine 30-cysteine 53, cysteine 56-cysteine 65, cysteine 68-cysteine 81, cysteine 84-cysteine 96, cysteine 86-cysteine 102, cysteine 104-cysteine 113, cysteine 116-cysteine 128, cysteine 139-cysteine 150, cysteine 141-cysteine 155, cysteine 157-cysteine 166, and cysteine 169-cysteine 184. 3 consecutive Laminin EGF-like domains span residues 28–83 (CDCN…RCLP), 84–130 (CNCN…GCTQ), and 139–186 (CDCD…GCTQ). Residues 187–196 (CFCYGHSASC) enclose the Laminin EGF-like 4; first part domain. The region spanning 213–381 (QDVDGWKAVQ…SGAPAPWVEQ (169 aa)) is the Laminin IV type A domain. Asparagine 342 and asparagine 362 each carry an N-linked (GlcNAc...) asparagine glycan. The Laminin EGF-like 4; second part domain occupies 382–415 (CICPVGYKGQFCQDCASGYKRDSARLGPFGTCIP). Laminin EGF-like domains lie at 416 to 461 (CNCQ…SCKP), 462 to 516 (CPCH…PCQP), and 517 to 572 (CQCN…KCRA). Intrachain disulfides connect cysteine 462/cysteine 470, cysteine 464/cysteine 481, cysteine 484/cysteine 493, cysteine 496/cysteine 514, cysteine 517/cysteine 531, cysteine 519/cysteine 538, cysteine 541/cysteine 550, cysteine 553/cysteine 570, cysteine 573/cysteine 585, cysteine 575/cysteine 591, and cysteine 593/cysteine 602. The 30-residue stretch at 573-602 (CNCNPMGSEPVGCRSDGTCVCKPGFGGPNC) folds into the Laminin EGF-like 8; truncated domain. Positions 603–1193 (EHGAFSCPAC…CYNTQALEQQ (591 aa)) are domain II and I. Residues 611–718 (ACYNQVKIQM…GSQYQNRVRD (108 aa)) are a coiled coil. O-linked (Xyl...) (chondroitin sulfate) serine glycosylation is found at serine 803 and serine 805. 2 coiled-coil regions span residues 811 to 1076 (AVVQ…AVQM) and 1117 to 1193 (EEGL…LEQQ). 2 N-linked (GlcNAc...) asparagine glycosylation sites follow: asparagine 942 and asparagine 1033.

In terms of assembly, laminin is a complex glycoprotein, consisting of three different polypeptide chains (alpha, beta, gamma), which are bound to each other by disulfide bonds into a cross-shaped molecule comprising one long and three short arms with globules at each end. Gamma-2 is a subunit of laminin-5 (laminin-332 or epiligrin/kalinin/nicein). Post-translationally, O-glycosylated; contains chondroitin sulfate (CS). CS attachment is on either Ser-803 or Ser-805. In terms of tissue distribution, the large variant is expressed only in specific epithelial cells of embryonic and neonatal tissues. In 17-week old embryo the small variant is found in cerebral cortex, lung, and distal tubes of kidney, but not in epithelia except for distal tubuli.

The protein resides in the secreted. It is found in the extracellular space. The protein localises to the extracellular matrix. Its subcellular location is the basement membrane. Binding to cells via a high affinity receptor, laminin is thought to mediate the attachment, migration and organization of cells into tissues during embryonic development by interacting with other extracellular matrix components. Ladsin exerts cell-scattering activity toward a wide variety of cells, including epithelial, endothelial, and fibroblastic cells. This is Laminin subunit gamma-2 (LAMC2) from Homo sapiens (Human).